A 74-amino-acid polypeptide reads, in one-letter code: Acyl carrier protein (74 aa).

One can recognise a Carrier domain in the interval 1 to 73; the sequence is MAVFEKVQEI…DLVAYVEEKS (73 aa). S35 bears the O-(pantetheine 4'-phosphoryl)serine mark.

This sequence belongs to the acyl carrier protein (ACP) family. In terms of processing, 4'-phosphopantetheine is transferred from CoA to a specific serine of apo-ACP by AcpS. This modification is essential for activity because fatty acids are bound in thioester linkage to the sulfhydryl of the prosthetic group.

It is found in the cytoplasm. Its pathway is lipid metabolism; fatty acid biosynthesis. Functionally, carrier of the growing fatty acid chain in fatty acid biosynthesis. The sequence is that of Acyl carrier protein from Streptococcus pyogenes serotype M1.